A 156-amino-acid polypeptide reads, in one-letter code: Ribosomal RNA large subunit methyltransferase H (156 aa).

Residues Leu72, Gly104, and 123 to 128 (FGAMVW) each bind S-adenosyl-L-methionine.

Belongs to the RNA methyltransferase RlmH family. Homodimer.

It localises to the cytoplasm. The enzyme catalyses pseudouridine(1915) in 23S rRNA + S-adenosyl-L-methionine = N(3)-methylpseudouridine(1915) in 23S rRNA + S-adenosyl-L-homocysteine + H(+). Its function is as follows. Specifically methylates the pseudouridine at position 1915 (m3Psi1915) in 23S rRNA. The polypeptide is Ribosomal RNA large subunit methyltransferase H (Dinoroseobacter shibae (strain DSM 16493 / NCIMB 14021 / DFL 12)).